The sequence spans 1429 residues: Nitric oxide synthase 1 (1429 aa).

The interaction with NOSIP stretch occupies residues 1-200 (MEENTFGVQQ…LQDIGEHDEL (200 aa)). The 83-residue stretch at 17–99 (SVRLFKRKVG…ETHVVLILRG (83 aa)) folds into the PDZ domain. Disordered regions lie at residues 152-174 (VTGL…SVSQ), 214-255 (GSKA…DNDR), and 271-298 (NNPY…SRCP). A compositionally biased stretch (low complexity) spans 160-174 (QHAQGHGQGAGSVSQ). Residues 163-240 (QGHGQGAGSV…TGIQVDRDLD (78 aa)) are interaction with DYNLL1/PIN. The segment covering 226–243 (AEMKDTGIQVDRDLDGKS) has biased composition (basic and acidic residues). Serine 280 is modified (phosphoserine). A compositionally biased stretch (polar residues) spans 280 to 294 (SPTSGKQSPTKNGSP). Position 334 (serine 334) interacts with (6R)-L-erythro-5,6,7,8-tetrahydrobiopterin. Residue cysteine 415 participates in heme b binding. Residues glutamine 478, tryptophan 587, tyrosine 588, and glutamate 592 each contribute to the L-arginine site. Valine 677, tryptophan 678, and phenylalanine 691 together coordinate (6R)-L-erythro-5,6,7,8-tetrahydrobiopterin. Tyrosine 706 serves as a coordination point for heme b. Residues 725–745 (KRRAIGFKKLAEAVKFSAKLM) are calmodulin-binding. In terms of domain architecture, Flavodoxin-like spans 755–935 (ATILYATETG…AFRTWAKKVF (181 aa)). FMN-binding residues include threonine 761, glutamate 762, threonine 763, lysine 765, serine 766, serine 807, threonine 808, and glycine 812. A phosphoserine mark is found at serine 847, serine 857, and serine 858. FMN-binding residues include serine 886, histidine 891, cysteine 893, glutamate 919, and glutamine 923. The FAD-binding FR-type domain occupies 990-1237 (KRVSAARLLS…VRGAPSFHLP (248 aa)). NADP(+) is bound at residue arginine 1010. Histidine 1032, arginine 1173, tyrosine 1174, tyrosine 1175, serine 1176, threonine 1191, and alanine 1193 together coordinate FAD. Serine 1196 is a binding site for NADP(+). 4 residues coordinate FAD: tyrosine 1197, valine 1210, cysteine 1211, and serine 1212. NADP(+) contacts are provided by threonine 1251, arginine 1284, serine 1313, arginine 1314, lysine 1320, tyrosine 1322, glutamine 1324, aspartate 1357, threonine 1398, and arginine 1400.

This sequence belongs to the NOS family. In terms of assembly, homodimer. Interacts with DLG4 (via N-terminal tandem pair of PDZ domains); the interaction possibly being prevented by the association between NOS1 and CAPON. Forms a ternary complex with CAPON and RASD1. Forms a ternary complex with CAPON and SYN1. Interacts with ZDHHC23. Interacts with NOSIP; which may impair its synaptic location. Interacts with HTR4. Interacts with SLC6A4. Interacts with VAC14. Forms a complex with ASL, ASS1 and SLC7A1; the complex regulates cell-autonomous L-arginine synthesis and citrulline recycling while channeling extracellular L-arginine to nitric oxide synthesis pathway. Interacts with DMD; localizes NOS1 to sarcolemma in muscle cells. Interacts with DYNLL1; inhibits the nitric oxide synthase activity. Requires heme b as cofactor. The cofactor is FAD. FMN serves as cofactor. It depends on (6R)-L-erythro-5,6,7,8-tetrahydrobiopterin as a cofactor. In terms of processing, ubiquitinated; mediated by STUB1/CHIP in the presence of Hsp70 and Hsp40 (in vitro). Isoform N-NOS-1 is expressed in brain and colorectum. Found in the Auerbach's plexus of the enteric nervous system. Isoform PNNOS is expressed in the penis, urethra, prostate, and skeletal muscle, and coexists with the cerebellar nnos in the pelvic plexus, bladder and liver, and is detectable in the cerebellum.

It is found in the cell membrane. The protein resides in the sarcolemma. Its subcellular location is the cell projection. It localises to the dendritic spine. It catalyses the reaction 2 L-arginine + 3 NADPH + 4 O2 + H(+) = 2 L-citrulline + 2 nitric oxide + 3 NADP(+) + 4 H2O. Stimulated by calcium/calmodulin. Inhibited by DYNLL1 that prevents the dimerization of the protein. Inhibited by NOSIP. Functionally, produces nitric oxide (NO) which is a messenger molecule with diverse functions throughout the body. In the brain and peripheral nervous system, NO displays many properties of a neurotransmitter. Inhibitory transmitter for non-adrenergic and non-cholinergic nerves in the colorectum. Probably has nitrosylase activity and mediates cysteine S-nitrosylation of cytoplasmic target proteins such SRR. Inhibitory transmitter for non-adrenergic and non-cholinergic nerves in the colorectum. The polypeptide is Nitric oxide synthase 1 (Rattus norvegicus (Rat)).